The sequence spans 782 residues: Translation initiation factor IF-2 (782 aa).

A disordered region spans residues 47-196; that stretch reads DNAIDGTNKK…TPPKPKELPE (150 aa). Residues 53-65 are compositionally biased toward basic and acidic residues; it reads TNKKAEAPKKETT. The segment covering 66 to 81 has biased composition (polar residues); the sequence is SNENGNSKGPNKPNMT. Composition is skewed to low complexity over residues 82–93 and 118–170; these read NSNEKSNKPNNP and NTSK…NNKG. One can recognise a tr-type G domain in the interval 283–452; sequence ERPPVVTIMG…LLVSEVEELK (170 aa). The G1 stretch occupies residues 292–299; that stretch reads GHVDHGKT. 292–299 serves as a coordination point for GTP; that stretch reads GHVDHGKT. The G2 stretch occupies residues 317–321; the sequence is GITQH. Residues 338 to 341 form a G3 region; it reads DTPG. Residues 338-342 and 392-395 contribute to the GTP site; these read DTPGH and NKID. Residues 392–395 are G4; it reads NKID. Residues 428–430 form a G5 region; that stretch reads SAK.

It belongs to the TRAFAC class translation factor GTPase superfamily. Classic translation factor GTPase family. IF-2 subfamily.

The protein resides in the cytoplasm. Functionally, one of the essential components for the initiation of protein synthesis. Protects formylmethionyl-tRNA from spontaneous hydrolysis and promotes its binding to the 30S ribosomal subunits. Also involved in the hydrolysis of GTP during the formation of the 70S ribosomal complex. The sequence is that of Translation initiation factor IF-2 from Listeria monocytogenes serotype 4b (strain CLIP80459).